A 320-amino-acid chain; its full sequence is o-succinylbenzoate synthase (320 aa).

Lys133 serves as the catalytic Proton donor. Mg(2+) is bound by residues Asp161, Glu190, and Asp213. Lys235 acts as the Proton acceptor in catalysis.

This sequence belongs to the mandelate racemase/muconate lactonizing enzyme family. MenC type 1 subfamily. The cofactor is a divalent metal cation.

It carries out the reaction (1R,6R)-6-hydroxy-2-succinyl-cyclohexa-2,4-diene-1-carboxylate = 2-succinylbenzoate + H2O. It participates in quinol/quinone metabolism; 1,4-dihydroxy-2-naphthoate biosynthesis; 1,4-dihydroxy-2-naphthoate from chorismate: step 4/7. The protein operates within quinol/quinone metabolism; menaquinone biosynthesis. Converts 2-succinyl-6-hydroxy-2,4-cyclohexadiene-1-carboxylate (SHCHC) to 2-succinylbenzoate (OSB). The protein is o-succinylbenzoate synthase of Shigella boydii serotype 18 (strain CDC 3083-94 / BS512).